Here is a 506-residue protein sequence, read N- to C-terminus: Maturase K (506 aa).

The protein belongs to the intron maturase 2 family. MatK subfamily.

The protein localises to the plastid. It localises to the chloroplast. In terms of biological role, usually encoded in the trnK tRNA gene intron. Probably assists in splicing its own and other chloroplast group II introns. This is Maturase K from Trifolium striatum (Knotted clover).